Consider the following 232-residue polypeptide: Enolase-phosphatase E1 (232 aa).

It belongs to the HAD-like hydrolase superfamily. MasA/MtnC family. In terms of assembly, monomer. Mg(2+) serves as cofactor.

It catalyses the reaction 5-methylsulfanyl-2,3-dioxopentyl phosphate + H2O = 1,2-dihydroxy-5-(methylsulfanyl)pent-1-en-3-one + phosphate. It functions in the pathway amino-acid biosynthesis; L-methionine biosynthesis via salvage pathway; L-methionine from S-methyl-5-thio-alpha-D-ribose 1-phosphate: step 3/6. Its pathway is amino-acid biosynthesis; L-methionine biosynthesis via salvage pathway; L-methionine from S-methyl-5-thio-alpha-D-ribose 1-phosphate: step 4/6. Its function is as follows. Bifunctional enzyme that catalyzes the enolization of 2,3-diketo-5-methylthiopentyl-1-phosphate (DK-MTP-1-P) into the intermediate 2-hydroxy-3-keto-5-methylthiopentenyl-1-phosphate (HK-MTPenyl-1-P), which is then dephosphorylated to form the acireductone 1,2-dihydroxy-3-keto-5-methylthiopentene (DHK-MTPene). In Xylella fastidiosa (strain Temecula1 / ATCC 700964), this protein is Enolase-phosphatase E1.